The following is a 292-amino-acid chain: AKT-interacting protein (292 aa).

Positions 1–11 (MNPLWSMSSGS) are enriched in polar residues. A disordered region spans residues 1-64 (MNPLWSMSSG…SPAPAAQSTN (64 aa)). Residues 14–23 (KRAEGEEKTL) are compositionally biased toward basic and acidic residues. Position 30 is a phosphoserine (Ser-30). In terms of domain architecture, UBC core spans 74-222 (YLEYSLLAEF…VVDSVKVCTA (149 aa)).

Belongs to the ubiquitin-conjugating enzyme family. FTS subfamily. In terms of assembly, component of the FTS/Hook/FHIP complex (FHF complex), composed of AKTIP/FTS, FHIP1B, and one or more members of the Hook family of proteins HOOK1, HOOK2, and HOOK3. Interacts directly with HOOK1, HOOK2 and HOOK3. The FHF complex associates with the homotypic vesicular sorting complex (the HOPS complex). Also interacts with AKT1. May interact with FHIP1A.

It localises to the cytoplasm. The protein resides in the cell membrane. Component of the FTS/Hook/FHIP complex (FHF complex). The FHF complex may function to promote vesicle trafficking and/or fusion via the homotypic vesicular protein sorting complex (the HOPS complex). Regulates apoptosis by enhancing phosphorylation and activation of AKT1. Increases release of TNFSF6 via the AKT1/GSK3B/NFATC1 signaling cascade. FHF complex promotes the distribution of AP-4 complex to the perinuclear area of the cell. The protein is AKT-interacting protein (Aktip) of Rattus norvegicus (Rat).